Reading from the N-terminus, the 275-residue chain is Urease accessory protein UreD (275 aa).

Belongs to the UreD family. As to quaternary structure, ureD, UreF and UreG form a complex that acts as a GTP-hydrolysis-dependent molecular chaperone, activating the urease apoprotein by helping to assemble the nickel containing metallocenter of UreC. The UreE protein probably delivers the nickel.

The protein resides in the cytoplasm. Its function is as follows. Required for maturation of urease via the functional incorporation of the urease nickel metallocenter. This chain is Urease accessory protein UreD, found in Cereibacter sphaeroides (strain ATCC 17029 / ATH 2.4.9) (Rhodobacter sphaeroides).